Reading from the N-terminus, the 321-residue chain is Glucokinase (321 aa).

8-13 (ADIGGT) provides a ligand contact to ATP.

Belongs to the bacterial glucokinase family.

It localises to the cytoplasm. It carries out the reaction D-glucose + ATP = D-glucose 6-phosphate + ADP + H(+). This is Glucokinase from Paramagnetospirillum magneticum (strain ATCC 700264 / AMB-1) (Magnetospirillum magneticum).